The chain runs to 425 residues: MGYFIDRRLNGKNKSMVNRQRFLRRYKSQIKQSISDAINKRSVTDIESGESVSIPIDDINEPMFHQGRGGLRHRVHPGNDHFITNDRIERPQGGGGGSGSGQGNAGQDGEGEDEFVFQISKDEYLDLLFEDLALPNLKKNQYKQLTEFKTHRAGYTSNGVPANISVVRSLQNSLARRTAMTASKRRELRELEETLKALENSEPAQLLEEERIRKAIAELKQKIARVPFIDTFDLRYKNYERRPEPSSQAVMFCLMDVSGSMDQATKDMAKRFYILLYLFLSRTYKNVDVVYIRHHTQAKEVDEQEFFYSQETGGTIVSSALKLMDEVVQERYDPAQWNIYAAQASDGDNWADDSPLCHELLAKKILPVVRYYSYIEITRRAHQTLWREYEDLQAKYENFAMQHIREPEDIYPVFRELFHRQTVDN.

The interval 84–110 is disordered; it reads TNDRIERPQGGGGGSGSGQGNAGQDGE. Residues 92 to 108 show a composition bias toward gly residues; it reads QGGGGGSGSGQGNAGQD.

This sequence belongs to the UPF0229 family.

The protein is UPF0229 protein YE2273 of Yersinia enterocolitica serotype O:8 / biotype 1B (strain NCTC 13174 / 8081).